Here is a 556-residue protein sequence, read N- to C-terminus: Formate--tetrahydrofolate ligase (556 aa).

Position 65-72 (65-72) interacts with ATP; it reads TPAGEGKT.

The protein belongs to the formate--tetrahydrofolate ligase family.

The catalysed reaction is (6S)-5,6,7,8-tetrahydrofolate + formate + ATP = (6R)-10-formyltetrahydrofolate + ADP + phosphate. The protein operates within one-carbon metabolism; tetrahydrofolate interconversion. The chain is Formate--tetrahydrofolate ligase from Symbiobacterium thermophilum (strain DSM 24528 / JCM 14929 / IAM 14863 / T).